A 204-amino-acid chain; its full sequence is Putative 3-methyladenine DNA glycosylase (204 aa).

Belongs to the DNA glycosylase MPG family.

The sequence is that of Putative 3-methyladenine DNA glycosylase from Bacillus mycoides (strain KBAB4) (Bacillus weihenstephanensis).